We begin with the raw amino-acid sequence, 452 residues long: Bifunctional protein GlmU (452 aa).

The tract at residues 1 to 232 is pyrophosphorylase; the sequence is MTTRTSLTIV…EDEVRGINTK (232 aa). UDP-N-acetyl-alpha-D-glucosamine is bound by residues 11-14, lysine 25, glutamine 78, and 83-84; these read LAAG and GT. Position 108 (aspartate 108) interacts with Mg(2+). UDP-N-acetyl-alpha-D-glucosamine contacts are provided by glycine 144, glutamate 158, asparagine 173, and asparagine 230. Asparagine 230 is a Mg(2+) binding site. A linker region spans residues 233–253; that stretch reads AQLAEAEAVMQTRLRQAAMTA. The segment at 254-452 is N-acetyltransferase; it reads GVTLISPETI…SARARKPKTS (199 aa). Arginine 319 and lysine 337 together coordinate UDP-N-acetyl-alpha-D-glucosamine. Histidine 349 functions as the Proton acceptor in the catalytic mechanism. The UDP-N-acetyl-alpha-D-glucosamine site is built by tyrosine 352 and asparagine 363. Acetyl-CoA-binding positions include alanine 366, 372 to 373, serine 391, serine 409, and arginine 426; that span reads NY.

The protein in the N-terminal section; belongs to the N-acetylglucosamine-1-phosphate uridyltransferase family. It in the C-terminal section; belongs to the transferase hexapeptide repeat family. As to quaternary structure, homotrimer. Mg(2+) is required as a cofactor.

Its subcellular location is the cytoplasm. It catalyses the reaction alpha-D-glucosamine 1-phosphate + acetyl-CoA = N-acetyl-alpha-D-glucosamine 1-phosphate + CoA + H(+). The enzyme catalyses N-acetyl-alpha-D-glucosamine 1-phosphate + UTP + H(+) = UDP-N-acetyl-alpha-D-glucosamine + diphosphate. It functions in the pathway nucleotide-sugar biosynthesis; UDP-N-acetyl-alpha-D-glucosamine biosynthesis; N-acetyl-alpha-D-glucosamine 1-phosphate from alpha-D-glucosamine 6-phosphate (route II): step 2/2. Its pathway is nucleotide-sugar biosynthesis; UDP-N-acetyl-alpha-D-glucosamine biosynthesis; UDP-N-acetyl-alpha-D-glucosamine from N-acetyl-alpha-D-glucosamine 1-phosphate: step 1/1. The protein operates within bacterial outer membrane biogenesis; LPS lipid A biosynthesis. Functionally, catalyzes the last two sequential reactions in the de novo biosynthetic pathway for UDP-N-acetylglucosamine (UDP-GlcNAc). The C-terminal domain catalyzes the transfer of acetyl group from acetyl coenzyme A to glucosamine-1-phosphate (GlcN-1-P) to produce N-acetylglucosamine-1-phosphate (GlcNAc-1-P), which is converted into UDP-GlcNAc by the transfer of uridine 5-monophosphate (from uridine 5-triphosphate), a reaction catalyzed by the N-terminal domain. The chain is Bifunctional protein GlmU from Rhodopseudomonas palustris (strain BisB5).